The primary structure comprises 1687 residues: A-kinase anchor protein SPHKAP (1687 aa).

Positions 1–14 (MDVNSRLSVQSNVE) are enriched in polar residues. Disordered regions lie at residues 1 to 25 (MDVN…PEPQ) and 272 to 293 (RKHR…ENTS). The PKA-RII subunit binding domain stretch occupies residues 914 to 931 (FAEELAETVVSMATEIAA). Residues 964-989 (LKRKKENSSAGSTVRKHKPPRLSEIK) form a disordered region. Residues Ser1010, Ser1070, Ser1092, Ser1105, Ser1106, Ser1109, Ser1244, and Ser1273 each carry the phosphoserine modification. Disordered regions lie at residues 1363–1406 (VTEG…SPRR) and 1421–1520 (DQKE…PDDT). The segment covering 1366–1375 (GNHSPVSSPG) has biased composition (polar residues). Over residues 1382–1393 (KPSDFDPRRETS) the composition is skewed to basic and acidic residues. Positions 1461-1470 (TAPSTCQSSR) are enriched in polar residues. Basic and acidic residues predominate over residues 1482–1494 (EVLKEDIPRDESR). Positions 1495–1508 (NPPSSSEESTGSWS) are enriched in low complexity.

This sequence belongs to the AKAP110 family. In terms of assembly, interacts (via the PKA-RII subunit binding domain) with the RI subunit of PKA. Interacts with SPHK1; the interaction greatly reduces SPHK1 activity.

It is found in the cytoplasm. Its function is as follows. Anchoring protein that binds preferentially to the type I regulatory subunit of c-AMP-dependent protein kinase (PKA type I) and targets it to distinct subcellular compartments. May act as a converging factor linking cAMP and sphingosine signaling pathways. Plays a regulatory role in the modulation of SPHK1. The chain is A-kinase anchor protein SPHKAP (Sphkap) from Mus musculus (Mouse).